The chain runs to 137 residues: Small ribosomal subunit protein uS11 (137 aa).

The disordered stretch occupies residues 1 to 30 (MAQAKKGGAPKKGQKTRRREKKNVPHGAAH). Residues 8-21 (GAPKKGQKTRRREK) show a composition bias toward basic residues.

Belongs to the universal ribosomal protein uS11 family. As to quaternary structure, part of the 30S ribosomal subunit. Interacts with proteins S7 and S18. Binds to IF-3.

Functionally, located on the platform of the 30S subunit, it bridges several disparate RNA helices of the 16S rRNA. Forms part of the Shine-Dalgarno cleft in the 70S ribosome. In Mycolicibacterium vanbaalenii (strain DSM 7251 / JCM 13017 / BCRC 16820 / KCTC 9966 / NRRL B-24157 / PYR-1) (Mycobacterium vanbaalenii), this protein is Small ribosomal subunit protein uS11.